The chain runs to 215 residues: Phosphoserine phosphatase (215 aa).

Aspartate 11 functions as the Nucleophile in the catalytic mechanism. 2 residues coordinate Mg(2+): aspartate 11 and aspartate 13. Aspartate 13 functions as the Proton donor in the catalytic mechanism. Substrate is bound by residues glutamate 20, arginine 56, 99-100 (SG), and lysine 144. Aspartate 167 is a binding site for Mg(2+). A substrate-binding site is contributed by asparagine 170.

It belongs to the HAD-like hydrolase superfamily. SerB family. Mg(2+) serves as cofactor.

The catalysed reaction is O-phospho-L-serine + H2O = L-serine + phosphate. It catalyses the reaction O-phospho-D-serine + H2O = D-serine + phosphate. Its pathway is amino-acid biosynthesis; L-serine biosynthesis; L-serine from 3-phospho-D-glycerate: step 3/3. This Streptococcus thermophilus (strain ATCC BAA-250 / LMG 18311) protein is Phosphoserine phosphatase.